Consider the following 287-residue polypeptide: DegV domain-containing protein DR_0500 (287 aa).

One can recognise a DegV domain in the interval 7 to 280; the sequence is FAVVTDGGLD…PRALGVAAAP (274 aa). The hexadecanoate site is built by Ser62 and Ser93.

In terms of biological role, may bind long-chain fatty acids, such as palmitate, and may play a role in lipid transport or fatty acid metabolism. The polypeptide is DegV domain-containing protein DR_0500 (Deinococcus radiodurans (strain ATCC 13939 / DSM 20539 / JCM 16871 / CCUG 27074 / LMG 4051 / NBRC 15346 / NCIMB 9279 / VKM B-1422 / R1)).